The following is a 303-amino-acid chain: D-alanyl-D-alanine carboxypeptidase (303 aa).

A helical membrane pass occupies residues 7 to 23; it reads LLLLLFLIYLGYDYVNE. The segment at 37 to 56 is disordered; it reads DQNPKEHLENSGTSENTQEK. Substrate contacts are provided by residues 154–156 and Ser-161; that span reads YAL. Zn(2+) contacts are provided by His-163 and Asp-170. The Proton donor/acceptor role is filled by Glu-213. A Zn(2+)-binding site is contributed by His-216.

Belongs to the peptidase M15B family. Zn(2+) serves as cofactor.

Its subcellular location is the cell membrane. With respect to regulation, the DD-carboxypeptidase activity is not inhibited by beta-lactam antibiotics. Functionally, cleaves the C-terminal D-alanine residue of UDP-muramyl-pentapeptide (UDP-MurNAc-L-Ala-D-Glu-mDAP-D-Ala-D-Ala) or diacetyl-L-Lys-D-Ala-D-Ala. However the physiological substrate likely contains L-Lys instead of mDAP at the third position of the pentapeptide. Also releases the C-terminal D-lactate from UDP-MurNAc-L-Ala-D-Glu-mDAP-D-Ala-D-lactate, a depsipeptide produced by the vancomycin resistance protein VanA. Therefore, VanY should contribute in vivo to the hydrolysis of both the D-alanyl-D-alanine- and the depsipeptide-containing peptidoglycan precursors. Is not necessary for vancomycin resistance of E.faecium BM4147 and perhaps not W14-9. Does not display transpeptidase or beta-lactamase activities. The polypeptide is D-alanyl-D-alanine carboxypeptidase (Enterococcus faecium (Streptococcus faecium)).